A 130-amino-acid chain; its full sequence is Small ribosomal subunit protein uS8 (130 aa).

This sequence belongs to the universal ribosomal protein uS8 family. Part of the 30S ribosomal subunit. Contacts proteins S5 and S12.

In terms of biological role, one of the primary rRNA binding proteins, it binds directly to 16S rRNA central domain where it helps coordinate assembly of the platform of the 30S subunit. This Shewanella sp. (strain MR-7) protein is Small ribosomal subunit protein uS8.